The following is a 184-amino-acid chain: NADH-quinone oxidoreductase subunit B (184 aa).

Positions 37, 38, 103, and 132 each coordinate [4Fe-4S] cluster.

This sequence belongs to the complex I 20 kDa subunit family. NDH-1 is composed of 14 different subunits. Subunits NuoB, C, D, E, F, and G constitute the peripheral sector of the complex. Requires [4Fe-4S] cluster as cofactor.

The protein resides in the cell membrane. The catalysed reaction is a quinone + NADH + 5 H(+)(in) = a quinol + NAD(+) + 4 H(+)(out). NDH-1 shuttles electrons from NADH, via FMN and iron-sulfur (Fe-S) centers, to quinones in the respiratory chain. The immediate electron acceptor for the enzyme in this species is believed to be a menaquinone. Couples the redox reaction to proton translocation (for every two electrons transferred, four hydrogen ions are translocated across the cytoplasmic membrane), and thus conserves the redox energy in a proton gradient. The protein is NADH-quinone oxidoreductase subunit B of Nocardia farcinica (strain IFM 10152).